Here is a 178-residue protein sequence, read N- to C-terminus: MSIEEIPEEIPQGADVTILSKNEKKARELIKKLHLKPVPGITRVTFKQKGNLIYAIEQPDVFKSAAGTYVVFGEAKVDDMNKRIAEAQAQQEQQEALTKAAADAETADKSPESITNDLQNASLEDKTVEEDEGEVDETGLDSKDIEIIVEQTQVSRAKAVKALRAHKGDMVNAIMELS.

The NAC-A/B domain occupies 20 to 84 (SKNEKKAREL…AKVDDMNKRI (65 aa)). Low complexity predominate over residues 87 to 104 (AQAQQEQQEALTKAAADA). Residues 87 to 142 (AQAQQEQQEALTKAAADAETADKSPESITNDLQNASLEDKTVEEDEGEVDETGLDS) are disordered. The segment covering 112–122 (ESITNDLQNAS) has biased composition (polar residues). Residues 127–139 (TVEEDEGEVDETG) show a composition bias toward acidic residues. Residues 140–178 (LDSKDIEIIVEQTQVSRAKAVKALRAHKGDMVNAIMELS) form the UBA domain.

The protein belongs to the NAC-alpha family. In terms of assembly, part of the nascent polypeptide-associated complex (NAC), consisting of EGD2 and EGD1. NAC associates with ribosomes via EGD1.

It is found in the cytoplasm. The protein localises to the nucleus. Its function is as follows. Component of the nascent polypeptide-associated complex (NAC), a dynamic component of the ribosomal exit tunnel, protecting the emerging polypeptides from interaction with other cytoplasmic proteins to ensure appropriate nascent protein targeting. The NAC complex also promotes mitochondrial protein import by enhancing productive ribosome interactions with the outer mitochondrial membrane and blocks the inappropriate interaction of ribosomes translating non-secretory nascent polypeptides with translocation sites in the membrane of the endoplasmic reticulum. EGD2 may also be involved in transcription regulation. This chain is Nascent polypeptide-associated complex subunit alpha (EGD2), found in Meyerozyma guilliermondii (strain ATCC 6260 / CBS 566 / DSM 6381 / JCM 1539 / NBRC 10279 / NRRL Y-324) (Yeast).